The chain runs to 132 residues: Small ribosomal subunit protein uS8 (132 aa).

It belongs to the universal ribosomal protein uS8 family. Part of the 30S ribosomal subunit. Contacts proteins S5 and S12.

Functionally, one of the primary rRNA binding proteins, it binds directly to 16S rRNA central domain where it helps coordinate assembly of the platform of the 30S subunit. The sequence is that of Small ribosomal subunit protein uS8 from Clostridium botulinum (strain ATCC 19397 / Type A).